We begin with the raw amino-acid sequence, 513 residues long: ATP synthase subunit alpha (513 aa).

169–176 lines the ATP pocket; it reads GDRQTGKS.

It belongs to the ATPase alpha/beta chains family. In terms of assembly, F-type ATPases have 2 components, CF(1) - the catalytic core - and CF(0) - the membrane proton channel. CF(1) has five subunits: alpha(3), beta(3), gamma(1), delta(1), epsilon(1). CF(0) has three main subunits: a(1), b(2) and c(9-12). The alpha and beta chains form an alternating ring which encloses part of the gamma chain. CF(1) is attached to CF(0) by a central stalk formed by the gamma and epsilon chains, while a peripheral stalk is formed by the delta and b chains.

It localises to the cell membrane. It carries out the reaction ATP + H2O + 4 H(+)(in) = ADP + phosphate + 5 H(+)(out). Its function is as follows. Produces ATP from ADP in the presence of a proton gradient across the membrane. The alpha chain is a regulatory subunit. The protein is ATP synthase subunit alpha of Baumannia cicadellinicola subsp. Homalodisca coagulata.